Consider the following 122-residue polypeptide: Big defensin (122 aa).

An N-terminal signal peptide occupies residues 1 to 28; it reads MTRPSLVRCYSLFFTALIVMAIICPAWS. Residues 29 to 34 constitute a propeptide that is removed on maturation; sequence EEIPKS. Cystine bridges form between Cys88–Cys119, Cys95–Cys114, and Cys99–Cys120.

The protein belongs to the big defensin family. In terms of tissue distribution, expressed in hemocytes.

It localises to the secreted. In terms of biological role, significantly inhibits the growth of Gram-negative and Gram-positive bacteria and fungi in vitro. The protein is Big defensin of Argopecten irradians (Bay scallop).